The chain runs to 372 residues: Cobalt-precorrin-5B C(1)-methyltransferase (372 aa).

It belongs to the CbiD family.

It carries out the reaction Co-precorrin-5B + S-adenosyl-L-methionine = Co-precorrin-6A + S-adenosyl-L-homocysteine. The protein operates within cofactor biosynthesis; adenosylcobalamin biosynthesis; cob(II)yrinate a,c-diamide from sirohydrochlorin (anaerobic route): step 6/10. Catalyzes the methylation of C-1 in cobalt-precorrin-5B to form cobalt-precorrin-6A. In Prochlorococcus marinus subsp. pastoris (strain CCMP1986 / NIES-2087 / MED4), this protein is Cobalt-precorrin-5B C(1)-methyltransferase.